We begin with the raw amino-acid sequence, 2136 residues long: Protein Ycf2 (2136 aa).

Residue 1404-1411 (GPIETGRS) participates in ATP binding.

This sequence belongs to the Ycf2 family.

The protein resides in the plastid. It localises to the chloroplast stroma. In terms of biological role, probable ATPase of unknown function. Its presence in a non-photosynthetic plant (Epifagus virginiana) and experiments in tobacco indicate that it has an essential function which is probably not related to photosynthesis. This Marchantia polymorpha (Common liverwort) protein is Protein Ycf2.